Reading from the N-terminus, the 107-residue chain is MGDSVLSAIQQTITQRKSANPSESYVAQLLHKGEDKILKKVIEEAGEVLMASKDKNPSHLVYEVADLWFHTMILLTHHDLKAEDVLDELARRQGLSGLAEKAARTES.

This sequence belongs to the PRA-PH family.

It is found in the cytoplasm. It catalyses the reaction 1-(5-phospho-beta-D-ribosyl)-ATP + H2O = 1-(5-phospho-beta-D-ribosyl)-5'-AMP + diphosphate + H(+). Its pathway is amino-acid biosynthesis; L-histidine biosynthesis; L-histidine from 5-phospho-alpha-D-ribose 1-diphosphate: step 2/9. The chain is Phosphoribosyl-ATP pyrophosphatase (hisE) from Neisseria meningitidis serogroup A / serotype 4A (strain DSM 15465 / Z2491).